We begin with the raw amino-acid sequence, 824 residues long: Intraflagellar transport protein 88 homolog (824 aa).

Disordered regions lie at residues 1–27 and 111–134; these read MENV…PAYD and AFDP…DSPE. 11 TPR repeats span residues 196–229, 232–265, 271–304, 415–448, 450–483, 484–517, 518–551, 552–585, 586–619, 620–653, and 654–687; these read YSVL…KMFS, GRLK…IPSV, IKIM…APSL, NDLE…DSRV, SAAA…DRYN, PSAL…DSSC, TEAL…LRNS, AQVL…VPTD, SQAL…FPSN, IEVI…QPTQ, and VKWQ…FPEN. Residues 721–731 show a composition bias toward basic and acidic residues; it reads EMREQRIKSGR. The interval 721–824 is disordered; that stretch reads EMREQRIKSG…EELGDDLLPE (104 aa). Positions 748 to 757 are enriched in polar residues; it reads DSGQNNSASS. A compositionally biased stretch (basic and acidic residues) spans 797 to 808; the sequence is ERPKTAAKKRID. Residues 809 to 824 show a composition bias toward acidic residues; the sequence is EDDFADEELGDDLLPE.

Component of the IFT complex B, at least composed of IFT20, IFT22, IFT25, IFT27, IFT46, IFT52, TRAF3IP1/IFT54, IFT57, IFT74, IFT80, IFT81, and IFT88. Interacts with IFT20, IFT22, IFT25, IFT27, IFT52, TRAF3IP1, IFT74, IFT80 and IFT81. Interacts with IFT172. Interacts with IFT57. Interacts with IFT46. Interacts with IFT70B. Interacts with C2CD3. Interacts with ENTR1 (via N-terminus). Interacts with LRRC56. Interacts with DZIP1. Interacts with CCDC38. Interacts with CCDC146. Interacts with CFAP53. As to expression, testis.

It localises to the cytoplasm. Its subcellular location is the cytoskeleton. It is found in the microtubule organizing center. The protein localises to the centrosome. The protein resides in the centriole. It localises to the cilium basal body. Its subcellular location is the cell projection. It is found in the cilium. The protein localises to the flagellum. In terms of biological role, positively regulates primary cilium biogenesis. Also involved in autophagy since it is required for trafficking of ATG16L and the expansion of the autophagic compartment. The protein is Intraflagellar transport protein 88 homolog (Ift88) of Mus musculus (Mouse).